Consider the following 369-residue polypeptide: DNA replication and repair protein RecF (369 aa).

ATP is bound at residue 30–37 (GDNAQGKT).

It belongs to the RecF family.

Its subcellular location is the cytoplasm. Its function is as follows. The RecF protein is involved in DNA metabolism; it is required for DNA replication and normal SOS inducibility. RecF binds preferentially to single-stranded, linear DNA. It also seems to bind ATP. The protein is DNA replication and repair protein RecF of Streptococcus equi subsp. zooepidemicus (strain MGCS10565).